We begin with the raw amino-acid sequence, 352 residues long: Probable gamma-glutamyl hydrolase 3 (352 aa).

The signal sequence occupies residues 1–19; that stretch reads MWRFCFFLSLLFFDVSAVK. Residues 49–352 form the Gamma-glutamyl hydrolase domain; that stretch reads AADPNLNYKP…SGDDEVYIFT (304 aa). The Nucleophile role is filled by Cys-166. The active site involves His-279.

It belongs to the peptidase C26 family.

The protein localises to the vacuole. Its subcellular location is the secreted. It localises to the extracellular space. The protein resides in the cell wall. It catalyses the reaction (6S)-5,6,7,8-tetrahydrofolyl-(gamma-L-Glu)(n) + (n-1) H2O = (6S)-5,6,7,8-tetrahydrofolate + (n-1) L-glutamate. Its function is as follows. Cleaves the polyglutamate sidechains of folate polyglutamates in the vacuole. Is important for polyglutamyl tail length determination before vacuolar exit. Plays a role on folate stability and intracellular folate content. This chain is Probable gamma-glutamyl hydrolase 3 (GGH3), found in Arabidopsis thaliana (Mouse-ear cress).